The sequence spans 82 residues: Putative membrane protein insertion efficiency factor (82 aa).

Belongs to the UPF0161 family.

It is found in the cell inner membrane. Functionally, could be involved in insertion of integral membrane proteins into the membrane. This is Putative membrane protein insertion efficiency factor from Rickettsia felis (strain ATCC VR-1525 / URRWXCal2) (Rickettsia azadi).